The sequence spans 316 residues: Probable cell division protein WhiA (316 aa).

Residues 276–309 (SLEELGKIAEPQITKDAIAGRIRRLLQLAEKTEK) constitute a DNA-binding region (H-T-H motif).

Belongs to the WhiA family.

In terms of biological role, involved in cell division and chromosome segregation. This chain is Probable cell division protein WhiA, found in Bifidobacterium longum subsp. infantis (strain ATCC 15697 / DSM 20088 / JCM 1222 / NCTC 11817 / S12).